The primary structure comprises 412 residues: Glutamate-pyruvate aminotransferase AlaC (412 aa).

Position 244 is an N6-(pyridoxal phosphate)lysine (Lys244).

Belongs to the class-I pyridoxal-phosphate-dependent aminotransferase family. Homodimer. The cofactor is pyridoxal 5'-phosphate.

It is found in the cytoplasm. The enzyme catalyses L-alanine + 2-oxoglutarate = pyruvate + L-glutamate. The protein operates within amino-acid biosynthesis; L-alanine biosynthesis. Involved in the biosynthesis of alanine. Catalyzes the transamination of pyruvate by glutamate, leading to the formation of L-alanine and 2-oxoglutarate. Is also able to catalyze the reverse reaction. This chain is Glutamate-pyruvate aminotransferase AlaC, found in Escherichia coli (strain K12).